The chain runs to 108 residues: Translation initiation factor 1A (108 aa).

The region spanning 11–85 (PSKDVPKPEE…TKADIVYRYM (75 aa)) is the S1-like domain.

The protein belongs to the eIF-1A family.

Seems to be required for maximal rate of protein biosynthesis. Enhances ribosome dissociation into subunits and stabilizes the binding of the initiator Met-tRNA(I) to 40 S ribosomal subunits. This chain is Translation initiation factor 1A (eIF1A), found in Metallosphaera sedula (strain ATCC 51363 / DSM 5348 / JCM 9185 / NBRC 15509 / TH2).